The primary structure comprises 439 residues: Protease Do-like 1, chloroplastic (439 aa).

Positions 154–323 are serine protease; sequence QGSGSGFVWD…IPVDTVGGIV (170 aa). Active-site charge relay system residues include His-173, Asp-203, and Ser-282. The region spanning 326–423 is the PDZ domain; sequence LVRFGKVTRP…EVTVEVLRGD (98 aa).

This sequence belongs to the peptidase S1C family. As to quaternary structure, interacts with PTAC16 and other potential targets for degradation under high light conditions.

It localises to the plastid. The protein localises to the chloroplast thylakoid membrane. Its activity is regulated as follows. Inhibited by phenylmethylsulfonyl fluoride and O-phenanthroline. Its function is as follows. Serine protease that is required at high temperature. May be involved in the degradation of damaged proteins. In vivo, can degrade beta-casein. The chain is Protease Do-like 1, chloroplastic (DEGP1) from Arabidopsis thaliana (Mouse-ear cress).